The chain runs to 196 residues: Ribonuclease HII (196 aa).

In terms of domain architecture, RNase H type-2 spans 9–196 (RLVAGVDEVG…KPVRRALGIE (188 aa)). 3 residues coordinate a divalent metal cation: D15, E16, and D107.

Belongs to the RNase HII family. Mn(2+) serves as cofactor. Requires Mg(2+) as cofactor.

It localises to the cytoplasm. It catalyses the reaction Endonucleolytic cleavage to 5'-phosphomonoester.. Functionally, endonuclease that specifically degrades the RNA of RNA-DNA hybrids. The sequence is that of Ribonuclease HII from Aeromonas hydrophila subsp. hydrophila (strain ATCC 7966 / DSM 30187 / BCRC 13018 / CCUG 14551 / JCM 1027 / KCTC 2358 / NCIMB 9240 / NCTC 8049).